The primary structure comprises 152 residues: SsrA-binding protein (152 aa).

It belongs to the SmpB family.

It is found in the cytoplasm. In terms of biological role, required for rescue of stalled ribosomes mediated by trans-translation. Binds to transfer-messenger RNA (tmRNA), required for stable association of tmRNA with ribosomes. tmRNA and SmpB together mimic tRNA shape, replacing the anticodon stem-loop with SmpB. tmRNA is encoded by the ssrA gene; the 2 termini fold to resemble tRNA(Ala) and it encodes a 'tag peptide', a short internal open reading frame. During trans-translation Ala-aminoacylated tmRNA acts like a tRNA, entering the A-site of stalled ribosomes, displacing the stalled mRNA. The ribosome then switches to translate the ORF on the tmRNA; the nascent peptide is terminated with the 'tag peptide' encoded by the tmRNA and targeted for degradation. The ribosome is freed to recommence translation, which seems to be the essential function of trans-translation. This Rickettsia conorii (strain ATCC VR-613 / Malish 7) protein is SsrA-binding protein.